The primary structure comprises 226 residues: 7-cyano-7-deazaguanine synthase (226 aa).

Residue 7 to 17 (LSGGMDSLVTT) participates in ATP binding. The Zn(2+) site is built by Cys-187, Cys-195, Cys-198, and Cys-201.

The protein belongs to the QueC family. Zn(2+) serves as cofactor.

The catalysed reaction is 7-carboxy-7-deazaguanine + NH4(+) + ATP = 7-cyano-7-deazaguanine + ADP + phosphate + H2O + H(+). Its pathway is purine metabolism; 7-cyano-7-deazaguanine biosynthesis. In terms of biological role, catalyzes the ATP-dependent conversion of 7-carboxy-7-deazaguanine (CDG) to 7-cyano-7-deazaguanine (preQ(0)). The protein is 7-cyano-7-deazaguanine synthase of Chlorobium phaeobacteroides (strain DSM 266 / SMG 266 / 2430).